A 254-amino-acid chain; its full sequence is Alcohol dehydrogenase 2 (254 aa).

Position 10–33 (10–33 (FVAGLGGIGFDTSREIVKSGPKNL)) interacts with NAD(+). S138 contacts substrate. Y151 (proton acceptor) is an active-site residue.

Belongs to the short-chain dehydrogenases/reductases (SDR) family. Homodimer.

It carries out the reaction a primary alcohol + NAD(+) = an aldehyde + NADH + H(+). The enzyme catalyses a secondary alcohol + NAD(+) = a ketone + NADH + H(+). The polypeptide is Alcohol dehydrogenase 2 (Adh2) (Drosophila wheeleri (Fruit fly)).